The primary structure comprises 263 residues: Acyl-[acyl-carrier-protein]--UDP-N-acetylglucosamine O-acyltransferase (263 aa).

The protein belongs to the transferase hexapeptide repeat family. LpxA subfamily. As to quaternary structure, homotrimer.

It is found in the cytoplasm. The catalysed reaction is a (3R)-hydroxyacyl-[ACP] + UDP-N-acetyl-alpha-D-glucosamine = a UDP-3-O-[(3R)-3-hydroxyacyl]-N-acetyl-alpha-D-glucosamine + holo-[ACP]. It participates in glycolipid biosynthesis; lipid IV(A) biosynthesis; lipid IV(A) from (3R)-3-hydroxytetradecanoyl-[acyl-carrier-protein] and UDP-N-acetyl-alpha-D-glucosamine: step 1/6. Involved in the biosynthesis of lipid A, a phosphorylated glycolipid that anchors the lipopolysaccharide to the outer membrane of the cell. This Xanthomonas oryzae pv. oryzae (strain PXO99A) protein is Acyl-[acyl-carrier-protein]--UDP-N-acetylglucosamine O-acyltransferase.